Here is a 372-residue protein sequence, read N- to C-terminus: Alpha-parvin (372 aa).

The disordered stretch occupies residues 1–31 (MATSPQKSPLVPKSPTPKSPPSRKKDDSFLG). A2 is subject to N-acetylalanine. Phosphoserine occurs at positions 8, 14, and 19. Residues 21–25 (PSRKK) are interaction with ARHGAP31. 2 positions are modified to phosphoserine: S28 and S62. 2 Calponin-homology (CH) domains span residues 95–202 (QELM…QYFR) and 262–369 (NVVK…TKYR). Residues 223 to 372 (GILQSRQIQE…NLFTKYRNVE (150 aa)) form a required for interaction with TESK1 and ILK region.

Belongs to the parvin family. In terms of assembly, component of the heterotrimeric IPP (ILK-PINCH-PARVIN) complex composed of ILK, LIMS1/PINCH and PARVA; the complex binds to F-actin via the C-terminal tail of LIMS1 and the N-terminal region of PARVA, promoting F-actin filament bundling. Interacts with TGFB1I1. Interacts with ARHGAP31. Interacts with the actin cytoskeleton. Interacts (via C-terminus) with TESK1 (via C-terminus); the interaction inhibits TESK1 kinase activity. Interacts with PXN/PAXILLIN (via LD motif 4).

It is found in the cell junction. It localises to the focal adhesion. The protein resides in the cell membrane. Its subcellular location is the cytoplasm. The protein localises to the cytoskeleton. It is found in the myofibril. It localises to the sarcomere. The protein resides in the z line. Its function is as follows. Plays a role in sarcomere organization and in smooth muscle cell contraction. Required for normal development of the embryonic cardiovascular system, and for normal septation of the heart outflow tract. Plays a role in sprouting angiogenesis and is required for normal adhesion of vascular smooth muscle cells to endothelial cells during blood vessel development. Plays a role in the reorganization of the actin cytoskeleton, formation of lamellipodia and ciliogenesis. Plays a role in the establishment of cell polarity, cell adhesion, cell spreading, and directed cell migration. Within the IPP (ILK-PINCH-PARVIN) complex, binds to F-actin, promoting F-actin bundling, a process required to generate force for actin cytoskeleton reorganization and subsequent dynamic cell adhesion events such as cell spreading and migration. The chain is Alpha-parvin (Parva) from Mus musculus (Mouse).